The sequence spans 270 residues: Undecaprenyl-diphosphatase (270 aa).

8 helical membrane passes run 1-21, 39-59, 87-107, 114-134, 147-167, 193-213, 223-243, and 250-270; these read MDLFNAAILALIQGITEFLPI, QGLVFDIAANSGSLAAVMLYF, SHLVLQLALATIPVGLVGLAC, VARDPMIIATTSILFGLLLWW, ALSWRQVGIIGIAQAFALIPG, FLMAIPVGILAALLDLKDLFA, FLGVGFCVSGLSAYMVIHGLL, and TMTPFVVYRVVLGVVIFATLG.

Belongs to the UppP family.

It localises to the cell inner membrane. It catalyses the reaction di-trans,octa-cis-undecaprenyl diphosphate + H2O = di-trans,octa-cis-undecaprenyl phosphate + phosphate + H(+). Catalyzes the dephosphorylation of undecaprenyl diphosphate (UPP). Confers resistance to bacitracin. This chain is Undecaprenyl-diphosphatase, found in Magnetococcus marinus (strain ATCC BAA-1437 / JCM 17883 / MC-1).